Reading from the N-terminus, the 644-residue chain is Phosphomethylpyrimidine synthase (644 aa).

Substrate-binding positions include Asn-236, Met-265, Tyr-294, His-330, 350-352, 391-394, and Glu-430; these read SRG and DGLR. Position 434 (His-434) interacts with Zn(2+). Tyr-457 lines the substrate pocket. His-498 contacts Zn(2+). Residues Cys-578, Cys-581, and Cys-586 each contribute to the [4Fe-4S] cluster site. A disordered region spans residues 623-644; sequence RQKSEEFKASGSELYHPAVEAE.

This sequence belongs to the ThiC family. Homodimer. Requires [4Fe-4S] cluster as cofactor.

It catalyses the reaction 5-amino-1-(5-phospho-beta-D-ribosyl)imidazole + S-adenosyl-L-methionine = 4-amino-2-methyl-5-(phosphooxymethyl)pyrimidine + CO + 5'-deoxyadenosine + formate + L-methionine + 3 H(+). The protein operates within cofactor biosynthesis; thiamine diphosphate biosynthesis. In terms of biological role, catalyzes the synthesis of the hydroxymethylpyrimidine phosphate (HMP-P) moiety of thiamine from aminoimidazole ribotide (AIR) in a radical S-adenosyl-L-methionine (SAM)-dependent reaction. The sequence is that of Phosphomethylpyrimidine synthase from Aliivibrio fischeri (strain MJ11) (Vibrio fischeri).